The primary structure comprises 452 residues: Phosphatidylinositol N-acetylglucosaminyltransferase GPI3 subunit (452 aa).

Residues L407–P427 form a helical membrane-spanning segment.

Belongs to the glycosyltransferase group 1 family. Component of the phosphatidylinositol N-acetylglucosaminyltransferase complex composed of at least GPI1, GPI2, GPI3, GPI15, GPI19 and ERI1.

The protein localises to the endoplasmic reticulum membrane. It carries out the reaction a 1,2-diacyl-sn-glycero-3-phospho-(1D-myo-inositol) + UDP-N-acetyl-alpha-D-glucosamine = a 6-(N-acetyl-alpha-D-glucosaminyl)-1-(1,2-diacyl-sn-glycero-3-phospho)-1D-myo-inositol + UDP + H(+). It participates in glycolipid biosynthesis; glycosylphosphatidylinositol-anchor biosynthesis. With respect to regulation, inhibited by Ras, probably via the interaction between RAS2 and ERI1. Functionally, catalytic subunit in the complex catalyzing the transfer of N-acetylglucosamine from UDP-N-acetylglucosamine to phosphatidylinositol, the first step of GPI biosynthesis. This Saccharomyces cerevisiae (strain YJM789) (Baker's yeast) protein is Phosphatidylinositol N-acetylglucosaminyltransferase GPI3 subunit (SPT14).